Here is a 461-residue protein sequence, read N- to C-terminus: V-type ATP synthase beta chain (461 aa).

The protein belongs to the ATPase alpha/beta chains family.

Produces ATP from ADP in the presence of a proton gradient across the membrane. The V-type beta chain is a regulatory subunit. The polypeptide is V-type ATP synthase beta chain (Streptococcus pneumoniae (strain CGSP14)).